A 712-amino-acid polypeptide reads, in one-letter code: Sterol uptake control protein 2 (712 aa).

Residues 1–19 (MMMTVKQESPNSTLNTSEF) are compositionally biased toward polar residues. The interval 1-52 (MMMTVKQESPNSTLNTSEFSSDENLKTNNSEPPKKVSKSSTGKRKYHQKSRN) is disordered. Positions 35–50 (KVSKSSTGKRKYHQKS) are enriched in basic residues. Positions 54 to 81 (CSTCKKRRVKCDEQRPVCGNCTKLKLDC) form a DNA-binding region, zn(2)-C6 fungal-type. Disordered stretches follow at residues 95–150 (KKDI…VIPP) and 236–342 (TTVP…ANPL). Polar residues-rich tracts occupy residues 113-143 (STVSAASDSESTTQQATPSLTPSPNHSQDIK), 252-306 (RKSQ…SGSP), and 326-337 (KSLPNISPNMSI).

It localises to the nucleus. Transcription factor involved in the regulation of ergosterol biosynthetic genes such as ERG2 and ERG11 through direct binding to sterol response elements (SREs) in the promoters. Also binds to its own promoter on 2 cis-acting elements to promote autoregulation. Regulates sterol uptake across the plasma membrane. Acts as a major regulator of ascorbic acid-induced response. Plays a role in the triggering of pyroptosis, an inflammasome-mediated programmed cell death pathway in macrophages, allowing macrophages escaping. This Candida albicans (strain SC5314 / ATCC MYA-2876) (Yeast) protein is Sterol uptake control protein 2.